Reading from the N-terminus, the 342-residue chain is Glucokinase (342 aa).

15-20 is an ATP binding site; sequence GDVGGT.

This sequence belongs to the bacterial glucokinase family.

It localises to the cytoplasm. It carries out the reaction D-glucose + ATP = D-glucose 6-phosphate + ADP + H(+). The polypeptide is Glucokinase (Ralstonia nicotianae (strain ATCC BAA-1114 / GMI1000) (Ralstonia solanacearum)).